An 888-amino-acid chain; its full sequence is Mitogen-activated protein kinase kinase kinase 12 (888 aa).

Basic and acidic residues predominate over residues Met26–Leu42. Positions Met26–Arg104 are disordered. A phosphothreonine mark is found at Thr37 and Thr43. The span at Ser64–Pro75 shows a compositional bias: pro residues. The region spanning Ile158–Ile399 is the Protein kinase domain. Residues Val164 to Val172 and Lys185 contribute to the ATP site. The Proton acceptor role is filled by Asp269. Leucine-zipper stretches follow at residues Val423 to Leu444 and Leu476 to Leu497. The tract at residues Gly557 to Trp620 is disordered. Positions Arg572–Ser584 are enriched in basic residues. Gly residues predominate over residues Gly605–Val615. At Ser640 the chain carries Phosphoserine. Disordered stretches follow at residues Arg654 to Leu731 and Thr743 to Pro888. A compositionally biased stretch (gly residues) spans Pro704 to Arg725. Positions Ser752–Val763 are enriched in acidic residues. Polar residues-rich tracts occupy residues Asn776–Pro789 and Ser798–Asn812. Basic and acidic residues predominate over residues Thr813–Asp823.

The protein belongs to the protein kinase superfamily. STE Ser/Thr protein kinase family. MAP kinase kinase kinase subfamily. In terms of assembly, homodimer. Interacts with MBIP. Mg(2+) is required as a cofactor. In terms of processing, autophosphorylated on Ser/Thr. Phosphorylated in cytosol under basal conditions and dephosphorylated when membrane-associated. The activity of MAP3K12 can be regulated through its proteasomal degradation. APOE, through a receptor-mediated mechanism, activates MAP3K12 by preventing its proteasomal degradation.

The protein resides in the cytoplasm. It localises to the cell membrane. The enzyme catalyses L-seryl-[protein] + ATP = O-phospho-L-seryl-[protein] + ADP + H(+). It carries out the reaction L-threonyl-[protein] + ATP = O-phospho-L-threonyl-[protein] + ADP + H(+). Part of a non-canonical MAPK signaling pathway. Activated by APOE, enhances the AP-1-mediated transcription of APP, via a MAP kinase signal transduction pathway composed of MAP2K7 and MAPK1/ERK2 and MAPK3/ERK1. May be an activator of the JNK/SAPK pathway. In Rattus norvegicus (Rat), this protein is Mitogen-activated protein kinase kinase kinase 12 (Map3k12).